The primary structure comprises 411 residues: Probable phosphatase HAD1 (411 aa).

Positions 14–23 are enriched in polar residues; that stretch reads LPSPNTSQPP. The segment at 14-33 is disordered; sequence LPSPNTSQPPSAAPSRRGSF. Asp61 (nucleophile) is an active-site residue. Mg(2+) contacts are provided by Asp61, Asp63, and Asp338. Asp63 serves as the catalytic Proton donor. Residues 296 to 386 form a disordered region; sequence PRPTPDVTPV…QSGQAGVTLD (91 aa). Residues 326–345 show a composition bias toward polar residues; that stretch reads VRNTQTIMKGSDDLTGNDSV. Over residues 362–373 the composition is skewed to basic and acidic residues; it reads SVEKRAEMEFHR.

It belongs to the HAD-like hydrolase superfamily. Phosphorylated.

Its function is as follows. Probable phosphatase. Required for cell wall integrity and virulence. The sequence is that of Probable phosphatase HAD1 from Cryptococcus neoformans var. grubii serotype A (strain H99 / ATCC 208821 / CBS 10515 / FGSC 9487) (Filobasidiella neoformans var. grubii).